The chain runs to 169 residues: Protein UL138 (169 aa).

A helical membrane pass occupies residues 8–28; the sequence is VGLPIIGVMLVLIVAILCYLA. Positions 109-133 are disordered; it reads DRRAGSSSSSSVHVANQRNSVPPPD.

As to quaternary structure, interacts with host TNFR1. Interacts with host MRP1. Interacts with host UAF1/WDR48. Interacts with host STING1.

It is found in the host Golgi apparatus membrane. Plays an important role in the establishment of latent viral infection. Modulates the expression of several host cell surface receptors such as TNFR1, CD36 or the MRP1 transporter during productive infection. For instance, associates with host MRP1 and induces its lysosomal degradation. Plays an inhibitory role in the host cGAS/STING/TBK1 pathway and upstream of IRF3 phosphorylation and NF-kappa-B leading to inhibition of interferon beta production during both lytic and latent infections. Also participates in the establishment of latency by sustaining an innate immune response through phosphorylation and activation of host STAT1. This chain is Protein UL138 (UL138), found in Human cytomegalovirus (strain Merlin) (HHV-5).